We begin with the raw amino-acid sequence, 86 residues long: RNA-binding protein Hfq (86 aa).

The Sm domain maps to D10–I71.

Belongs to the Hfq family. In terms of assembly, homohexamer.

In terms of biological role, RNA chaperone that binds small regulatory RNA (sRNAs) and mRNAs to facilitate mRNA translational regulation in response to envelope stress, environmental stress and changes in metabolite concentrations. Also binds with high specificity to tRNAs. This Clostridioides difficile (strain 630) (Peptoclostridium difficile) protein is RNA-binding protein Hfq.